Consider the following 205-residue polypeptide: Non-structural protein NS3 (205 aa).

The segment at 177 to 205 is disordered; that stretch reads GTRSPETGCRKVTSGLPHGASGGSGTRQG. The span at 196–205 shows a compositional bias: gly residues; the sequence is ASGGSGTRQG.

It belongs to the orbivirus NS3 family.

May play a role in the release of virions from infected cells. The sequence is that of Non-structural protein NS3 (Segment-10) from Broadhaven virus (BRD).